Reading from the N-terminus, the 541-residue chain is MNAIVEQLKSTADATKATDIRAAFAADSQRFSRFSVSLDDLLMDFSKTAVNDDILKLLVKLAEEGGVEKKREEMFSGKAINFTEDRAVLHTALRNRSNAPVLVDGKDVMPDVNAVLAAMGKFADDVRSGTLKGATGKAITDVVNIGIGGSDLGPVMATLALAPFHDGPRAHFVSNIDGAHIADILKLVQPETTLFIVASKTFTTVETMTNAQTARNFIAKALGEAAVQHHFAAVSTALDKVAAFGIDSARVFGFWDWVGGRYSIWSAIGLPLMIAVGPENFGKFLDGAHAVDNHFRKAPITENLPILLGLIGFYHRNVLGYPTRAILPYDQRLSRFPAYLQQLDMESNGKGVTIDGTPVEGNSGPVVWGEPGTNGQHAFYQLIHQGTSIIPAEFMIAANAFEPELRHQHQLLISNVLAQSEALMKGRTFAEAKKQLTDKGMDDKKADFIAPHRVFTGNRPSITFVYDKLTPYALGRLIALYEHRVFVEGVLFRINSFDQWGVELGKELATGLLPVVEGKESAASHDSSTQGLVAALAKLAK.

The active-site Proton donor is the Glu346. Residues His377 and Lys506 contribute to the active site.

It belongs to the GPI family.

It localises to the cytoplasm. The enzyme catalyses alpha-D-glucose 6-phosphate = beta-D-fructose 6-phosphate. The protein operates within carbohydrate biosynthesis; gluconeogenesis. Its pathway is carbohydrate degradation; glycolysis; D-glyceraldehyde 3-phosphate and glycerone phosphate from D-glucose: step 2/4. Catalyzes the reversible isomerization of glucose-6-phosphate to fructose-6-phosphate. This Rhizobium johnstonii (strain DSM 114642 / LMG 32736 / 3841) (Rhizobium leguminosarum bv. viciae) protein is Glucose-6-phosphate isomerase.